The sequence spans 441 residues: ATP-dependent protease ATPase subunit HslU (441 aa).

ATP is bound by residues Ile-18, 60-65 (GVGKTE), Asp-254, Glu-319, and Arg-391.

Belongs to the ClpX chaperone family. HslU subfamily. A double ring-shaped homohexamer of HslV is capped on each side by a ring-shaped HslU homohexamer. The assembly of the HslU/HslV complex is dependent on binding of ATP.

It localises to the cytoplasm. ATPase subunit of a proteasome-like degradation complex; this subunit has chaperone activity. The binding of ATP and its subsequent hydrolysis by HslU are essential for unfolding of protein substrates subsequently hydrolyzed by HslV. HslU recognizes the N-terminal part of its protein substrates and unfolds these before they are guided to HslV for hydrolysis. This Shewanella frigidimarina (strain NCIMB 400) protein is ATP-dependent protease ATPase subunit HslU.